The sequence spans 345 residues: Beta-hexosaminidase (345 aa).

Substrate is bound by residues Asp-60, Arg-68, Arg-132, and 162–163; that span reads KH. His-175 acts as the Proton donor/acceptor in catalysis. Asp-247 functions as the Nucleophile in the catalytic mechanism.

Belongs to the glycosyl hydrolase 3 family. NagZ subfamily.

The protein localises to the cytoplasm. The catalysed reaction is Hydrolysis of terminal non-reducing N-acetyl-D-hexosamine residues in N-acetyl-beta-D-hexosaminides.. The protein operates within cell wall biogenesis; peptidoglycan recycling. Functionally, plays a role in peptidoglycan recycling by cleaving the terminal beta-1,4-linked N-acetylglucosamine (GlcNAc) from peptide-linked peptidoglycan fragments, giving rise to free GlcNAc, anhydro-N-acetylmuramic acid and anhydro-N-acetylmuramic acid-linked peptides. This is Beta-hexosaminidase from Actinobacillus pleuropneumoniae serotype 3 (strain JL03).